A 187-amino-acid polypeptide reads, in one-letter code: Elongation factor P (187 aa).

It belongs to the elongation factor P family.

Its subcellular location is the cytoplasm. Its pathway is protein biosynthesis; polypeptide chain elongation. Functionally, involved in peptide bond synthesis. Stimulates efficient translation and peptide-bond synthesis on native or reconstituted 70S ribosomes in vitro. Probably functions indirectly by altering the affinity of the ribosome for aminoacyl-tRNA, thus increasing their reactivity as acceptors for peptidyl transferase. In Mycolicibacterium vanbaalenii (strain DSM 7251 / JCM 13017 / BCRC 16820 / KCTC 9966 / NRRL B-24157 / PYR-1) (Mycobacterium vanbaalenii), this protein is Elongation factor P.